Consider the following 185-residue polypeptide: Protein PBP4 (185 aa).

2 stretches are compositionally biased toward low complexity: residues methionine 1–serine 24 and alanine 46–glutamine 62. Disordered stretches follow at residues methionine 1 to glutamate 116 and glutamate 147 to lysine 168. 3 stretches are compositionally biased toward polar residues: residues proline 73–serine 83, lysine 91–asparagine 102, and glutamate 147–lysine 166.

Interacts with IGO1, LSM12 and PBP1.

It is found in the cytoplasm. The protein localises to the nucleus. This is Protein PBP4 (PBP4) from Saccharomyces cerevisiae (strain ATCC 204508 / S288c) (Baker's yeast).